The primary structure comprises 378 residues: Putative monoglyceride lipase (378 aa).

The GXSXG motif lies at 97 to 101 (GHSMG). S99 serves as the catalytic Nucleophile. Active-site charge relay system residues include D219 and H249. Basic and acidic residues predominate over residues 276–292 (PSETVKSEQETAVEHPK). Positions 276–350 (PSETVKSEQE…TSESTTVPET (75 aa)) are disordered. A compositionally biased stretch (low complexity) spans 293 to 305 (PTATTSAPSASPT). S301 carries the post-translational modification Phosphoserine. A compositionally biased stretch (polar residues) spans 341–350 (TSESTTVPET).

It belongs to the AB hydrolase superfamily. Monoacylglycerol lipase family.

It is found in the lipid droplet. The protein localises to the cytoplasm. The protein resides in the endoplasmic reticulum. Its subcellular location is the mitochondrion outer membrane. The catalysed reaction is Hydrolyzes glycerol monoesters of long-chain fatty acids.. It participates in glycerolipid metabolism; triacylglycerol degradation. Functionally, converts monoacylglycerides (MAG) to free fatty acids and glycerol. Has a strong preference for monounsaturated monoglycerides. Required for efficient degradation of MAG, short-lived intermediates of glycerolipid metabolism which may also function as lipid signaling molecules. Controls inactivation of the signaling lipid N-palmitoylethanolamine (PEA). Involved in fatty acid ethyl ester (FAEE) catabolism. FAEEs are non-oxidative metabolites of ethanol that are transiently incorporated into lipid droplets (LDs). Their mobilization by LD-resident FAEE hydrolases facilitates a controlled metabolism of these potentially toxic lipid metabolites. The sequence is that of Putative monoglyceride lipase (mgl1) from Schizosaccharomyces pombe (strain 972 / ATCC 24843) (Fission yeast).